The chain runs to 1301 residues: DNA-directed RNA polymerase subunit beta (1301 aa).

This sequence belongs to the RNA polymerase beta chain family. As to quaternary structure, in plastids the minimal PEP RNA polymerase catalytic core is composed of four subunits: alpha, beta, beta', and beta''. When a (nuclear-encoded) sigma factor is associated with the core the holoenzyme is formed, which can initiate transcription.

Its subcellular location is the plastid. The protein resides in the chloroplast. The catalysed reaction is RNA(n) + a ribonucleoside 5'-triphosphate = RNA(n+1) + diphosphate. Functionally, DNA-dependent RNA polymerase catalyzes the transcription of DNA into RNA using the four ribonucleoside triphosphates as substrates. The chain is DNA-directed RNA polymerase subunit beta from Chlorella vulgaris (Green alga).